A 191-amino-acid polypeptide reads, in one-letter code: Penicillin-binding protein activator LpoB (191 aa).

Positions 1–16 are cleaved as a signal peptide; sequence MKRYLSLALAALVLTG. Residue cysteine 17 is the site of N-palmitoyl cysteine attachment. The S-diacylglycerol cysteine moiety is linked to residue cysteine 17.

Belongs to the LpoB family. In terms of assembly, interacts with PBP1b.

The protein localises to the cell outer membrane. In terms of biological role, regulator of peptidoglycan synthesis that is essential for the function of penicillin-binding protein 1B (PBP1b). This chain is Penicillin-binding protein activator LpoB, found in Yersinia pestis (strain D182038).